A 376-amino-acid chain; its full sequence is S-adenosylmethionine synthase (376 aa).

His15 contacts ATP. Residue Asp17 coordinates Mg(2+). Glu43 contributes to the K(+) binding site. 2 residues coordinate L-methionine: Glu56 and Gln92. Residues 92-102 are flexible loop; sequence QSKEIANQVDR. ATP contacts are provided by residues 156 to 158, Asp231, 237 to 238, Ala254, and Lys258; these read DMK and RK. Asp231 lines the L-methionine pocket. Lys262 serves as a coordination point for L-methionine.

Belongs to the AdoMet synthase family. Homotetramer; dimer of dimers. It depends on Mg(2+) as a cofactor. K(+) serves as cofactor.

The protein resides in the cytoplasm. It carries out the reaction L-methionine + ATP + H2O = S-adenosyl-L-methionine + phosphate + diphosphate. Its pathway is amino-acid biosynthesis; S-adenosyl-L-methionine biosynthesis; S-adenosyl-L-methionine from L-methionine: step 1/1. Functionally, catalyzes the formation of S-adenosylmethionine (AdoMet) from methionine and ATP. The overall synthetic reaction is composed of two sequential steps, AdoMet formation and the subsequent tripolyphosphate hydrolysis which occurs prior to release of AdoMet from the enzyme. The protein is S-adenosylmethionine synthase of Mycoplasmopsis pulmonis (strain UAB CTIP) (Mycoplasma pulmonis).